A 149-amino-acid chain; its full sequence is Proline-rich acidic protein 1 (149 aa).

An N-terminal signal peptide occupies residues 1–20 (MKRFLLATCLVAALLWEAGA). Disordered stretches follow at residues 51-79 (EPLE…KRPD) and 97-122 (LQGP…EVPQ). Over residues 66 to 79 (PKQKPAAAEEKRPD) the composition is skewed to basic and acidic residues.

As to quaternary structure, interacts with MTTP. Interacts with MAD1L1. Predominantly expressed in the intestinal epithelial cells than in the liver (at protein level). Abundantly expressed in the uterus during late pregnancy by uterus epithelial cells. After birth expression rapidly decreases and is no longer found in the uterus by the third day. Also highly expressed in the small intestine where it shows a proximal-distal graded expression.

Its subcellular location is the secreted. The protein resides in the endoplasmic reticulum. Its function is as follows. Lipid-binding protein which promotes lipid absorption by facilitating MTTP-mediated lipid transfer (mainly triglycerides and phospholipids) and MTTP-mediated apoB lipoprotein assembly and secretion. Protects the gastrointestinal epithelium from irradiation-induced apoptosis. May play an important role in maintaining normal growth homeostasis in epithelial cells. Involved in p53/TP53-dependent cell survival after DNA damage. The polypeptide is Proline-rich acidic protein 1 (Prap1) (Mus musculus (Mouse)).